A 24-amino-acid polypeptide reads, in one-letter code: Snake venom metalloproteinase Batx-1 (24 aa).

One can recognise a Peptidase M12B domain in the interval 1–24 (YIELAVVADHGIFTKYNSNLNTIR). Glu3 serves as a coordination point for Ca(2+).

This sequence belongs to the venom metalloproteinase (M12B) family. P-I subfamily. As to quaternary structure, monomer. Zn(2+) is required as a cofactor. In terms of processing, the N-terminus is blocked. Post-translationally, contains 3 disulfide bonds. Expressed by the venom gland.

The protein localises to the secreted. With respect to regulation, inhibited by EDTA, and o-phenanthroline, but not inhibited by PMSF, pepstatin A, and aprotinin. Zinc metalloproteinase that exhits a weak hemorrhagic activity. Degrades preferentially the Aalpha- (FGA) and Bbeta-chains (FGB) of fibrinogen, and partially degrades gamma-chain (FGG) at higher concentration. Induces a mild myotoxicity, but lacks coagulant activity on human plasma or bovin fibrinogen and defibrinating activity. This is Snake venom metalloproteinase Batx-1 from Bothrops atrox (Barba amarilla).